Here is a 294-residue protein sequence, read N- to C-terminus: Nucleotide-binding protein CLD_1131 (294 aa).

Glycine 8–threonine 15 lines the ATP pocket. Residue aspartate 59–glycine 62 participates in GTP binding.

It belongs to the RapZ-like family.

Its function is as follows. Displays ATPase and GTPase activities. This Clostridium botulinum (strain Okra / Type B1) protein is Nucleotide-binding protein CLD_1131.